Reading from the N-terminus, the 201-residue chain is Nucleoid occlusion factor SlmA (201 aa).

The HTH tetR-type domain maps to 14–75 (KERQQQVLEV…ALIERIEMTL (62 aa)). Positions 38–57 (TTERLSKAVGVSEGALYRYF) form a DNA-binding region, H-T-H motif.

Belongs to the nucleoid occlusion factor SlmA family. As to quaternary structure, homodimer. Interacts with FtsZ.

Its subcellular location is the cytoplasm. The protein resides in the nucleoid. Required for nucleoid occlusion (NO) phenomenon, which prevents Z-ring formation and cell division over the nucleoid. Acts as a DNA-associated cell division inhibitor that binds simultaneously chromosomal DNA and FtsZ, and disrupts the assembly of FtsZ polymers. SlmA-DNA-binding sequences (SBS) are dispersed on non-Ter regions of the chromosome, preventing FtsZ polymerization at these regions. This is Nucleoid occlusion factor SlmA from Glaesserella parasuis serovar 5 (strain SH0165) (Haemophilus parasuis).